Here is a 211-residue protein sequence, read N- to C-terminus: MADESSDAAGEPQPAPAPVRRRSSANYRAYATEPHAKKKSKISASRKLQLKTLMLQIAKQEMEREAEERRGEKGRVLRTRCQPLELDGLGFEELQDLCRQLHARVDKVDEERYDVEAKVTKNITEIADLTQKIYDLRGKFKRPTLRRVRISADAMMQALLGTRAKESLDLRAHLKQVKKEDIEKENREVGDWRKNIDALSGMEGRKKKFEG.

The interval M1–S24 is disordered. The residue at position 2 (A2) is an N-acetylalanine. A phosphoserine mark is found at S5 and S6. Phosphoserine; by PKA and PKD/PRKD1 is present on residues S23 and S24. Y27 bears the Phosphotyrosine mark. T32 bears the Phosphothreonine; by STK4/MST1 mark. The interval E33–R80 is involved in binding TNC. S43 and S45 each carry phosphoserine; by PKC/PRKCE. T52 is subject to Phosphothreonine; by STK4/MST1. At T79 the chain carries Phosphothreonine. Phosphothreonine; by STK4/MST1 is present on residues T130 and T144. Residues T130–S151 are involved in binding TNC and actin. S151, S167, and S200 each carry phosphoserine.

This sequence belongs to the troponin I family. As to quaternary structure, interacts with TRIM63. Binds to actin and tropomyosin. Interacts with STK4/MST1. Post-translationally, phosphorylated at Ser-23 and Ser-24 by PRKD1; phosphorylation reduces myofilament calcium sensitivity. Phosphorylated preferentially at Thr-32. Phosphorylation by STK4/MST1 alters its binding affinity to TNNC1 (cardiac Tn-C) and TNNT2 (cardiac Tn-T). Phosphorylated at Ser-43 and Ser-45 by PRKCE; phosphorylation increases myocardium contractile dysfunction.

Its function is as follows. Troponin I is the inhibitory subunit of troponin, the thin filament regulatory complex which confers calcium-sensitivity to striated muscle actomyosin ATPase activity. In Mus musculus (Mouse), this protein is Troponin I, cardiac muscle (Tnni3).